The primary structure comprises 669 residues: Cysteine-rich receptor-like protein kinase 10 (669 aa).

The first 34 residues, 1 to 34 (MRRNTDQESPIMSYYSSFFFLFLFSFLTSFRVSA), serve as a signal peptide directing secretion. At 35–285 (QDPTYVYHTC…PRSGKDGNSK (251 aa)) the chain is on the extracellular side. 2 consecutive Gnk2-homologous domains span residues 38 to 142 (TYVY…NQNI) and 148 to 252 (TTGG…IYAF). Residues N49, N53, N71, and N80 are each glycosylated (N-linked (GlcNAc...) asparagine). 2 disulfides stabilise this stretch: C96/C105 and C108/C133. Residues N114, N159, N185, and N196 are each glycosylated (N-linked (GlcNAc...) asparagine). 2 disulfides stabilise this stretch: C209–C218 and C221–C243. A compositionally biased stretch (pro residues) spans 260 to 274 (PPPPPPSISTPPVSA). Residues 260–280 (PPPPPPSISTPPVSAPPRSGK) form a disordered region. A helical membrane pass occupies residues 286–306 (VLVIAIVVPIIVAVLLFIAGY). Topologically, residues 307–669 (CFLTRRARKS…DASITDIHPR (363 aa)) are cytoplasmic. One can recognise a Protein kinase domain in the interval 348–634 (FVESNKIGQG…TLPVPRQPGL (287 aa)). ATP is bound by residues 354–362 (IGQGGFGEV) and K376. Y421 carries the phosphotyrosine modification. D473 serves as the catalytic Proton acceptor. At S477 the chain carries Phosphoserine. At T513 the chain carries Phosphothreonine. A Phosphotyrosine modification is found at Y521.

The protein belongs to the protein kinase superfamily. Ser/Thr protein kinase family. CRK subfamily. In terms of assembly, interacts with CRKIP1 (KAPP), CRKIP2 and CRKIP3, three kinase-associated type 2C proteins.

Its subcellular location is the membrane. It carries out the reaction L-seryl-[protein] + ATP = O-phospho-L-seryl-[protein] + ADP + H(+). The enzyme catalyses L-threonyl-[protein] + ATP = O-phospho-L-threonyl-[protein] + ADP + H(+). In Arabidopsis thaliana (Mouse-ear cress), this protein is Cysteine-rich receptor-like protein kinase 10 (CRK10).